Here is a 317-residue protein sequence, read N- to C-terminus: Transaldolase (317 aa).

Lys126 functions as the Schiff-base intermediate with substrate in the catalytic mechanism.

Belongs to the transaldolase family. Type 1 subfamily. As to quaternary structure, homodimer.

Its subcellular location is the cytoplasm. The enzyme catalyses D-sedoheptulose 7-phosphate + D-glyceraldehyde 3-phosphate = D-erythrose 4-phosphate + beta-D-fructose 6-phosphate. It functions in the pathway carbohydrate degradation; pentose phosphate pathway; D-glyceraldehyde 3-phosphate and beta-D-fructose 6-phosphate from D-ribose 5-phosphate and D-xylulose 5-phosphate (non-oxidative stage): step 2/3. Its function is as follows. Transaldolase is important for the balance of metabolites in the pentose-phosphate pathway. This chain is Transaldolase, found in Burkholderia orbicola (strain MC0-3).